A 284-amino-acid chain; its full sequence is D-tagatose-1,6-bisphosphate aldolase subunit GatY (284 aa).

Asp82 acts as the Proton donor in catalysis. Residues His83 and His180 each coordinate Zn(2+). Gly181 contributes to the dihydroxyacetone phosphate binding site. His208 provides a ligand contact to Zn(2+). Residues Gly209–Ser211 and Asn230–Thr233 contribute to the dihydroxyacetone phosphate site.

Belongs to the class II fructose-bisphosphate aldolase family. TagBP aldolase GatY subfamily. Forms a complex with GatZ. Requires Zn(2+) as cofactor.

The catalysed reaction is D-tagatofuranose 1,6-bisphosphate = D-glyceraldehyde 3-phosphate + dihydroxyacetone phosphate. The protein operates within carbohydrate metabolism; D-tagatose 6-phosphate degradation; D-glyceraldehyde 3-phosphate and glycerone phosphate from D-tagatose 6-phosphate: step 2/2. In terms of biological role, catalytic subunit of the tagatose-1,6-bisphosphate aldolase GatYZ, which catalyzes the reversible aldol condensation of dihydroxyacetone phosphate (DHAP or glycerone-phosphate) with glyceraldehyde 3-phosphate (G3P) to produce tagatose 1,6-bisphosphate (TBP). Requires GatZ subunit for full activity and stability. Is involved in the catabolism of galactitol. The protein is D-tagatose-1,6-bisphosphate aldolase subunit GatY of Escherichia coli O8 (strain IAI1).